Here is a 287-residue protein sequence, read N- to C-terminus: ATP synthase gamma chain (287 aa).

It belongs to the ATPase gamma chain family. As to quaternary structure, F-type ATPases have 2 components, CF(1) - the catalytic core - and CF(0) - the membrane proton channel. CF(1) has five subunits: alpha(3), beta(3), gamma(1), delta(1), epsilon(1). CF(0) has three main subunits: a, b and c.

It localises to the cell inner membrane. Its function is as follows. Produces ATP from ADP in the presence of a proton gradient across the membrane. The gamma chain is believed to be important in regulating ATPase activity and the flow of protons through the CF(0) complex. This Salmonella paratyphi A (strain ATCC 9150 / SARB42) protein is ATP synthase gamma chain.